Reading from the N-terminus, the 128-residue chain is uncharacterized protein (128 aa).

The next 4 membrane-spanning stretches (helical) occupy residues 2–22, 34–54, 64–84, and 108–128; these read LPFY…LTVL, FLYD…AAVC, LPVL…ALFL, and LGLF…TLFL.

It is found in the cell membrane. This is an uncharacterized protein from Treponema pallidum (strain Nichols).